Reading from the N-terminus, the 366-residue chain is GTP-binding protein 10 (366 aa).

The region spanning 13-148 is the Obg domain; that stretch reads GNFIDNLRIF…RIVHLDLKVI (136 aa). Positions 149–344 constitute an OBG-type G domain; the sequence is ADVGLVGFPN…LKSCIRKALD (196 aa). Residues 155 to 162, 202 to 206, and 278 to 281 each bind GTP; these read GFPNAGKS, DLPGL, and NKMD. The segment covering 346-355 has biased composition (basic and acidic residues); sequence QDGKESDAHR. The segment at 346 to 366 is disordered; the sequence is QDGKESDAHRSKQLLNLQSSS.

This sequence belongs to the TRAFAC class OBG-HflX-like GTPase superfamily. OBG GTPase family.

It is found in the nucleus. It localises to the nucleolus. Functionally, may be involved in the ribosome maturation process. The chain is GTP-binding protein 10 (Gtpbp10) from Mus musculus (Mouse).